We begin with the raw amino-acid sequence, 255 residues long: Probable sulfate transport system permease protein cysT (255 aa).

7 consecutive transmembrane segments (helical) span residues 2-22 (LGNH…SLIL), 48-68 (MALI…WVIT), 77-97 (FIDA…GLTL), 118-138 (IIYT…PFVI), 167-187 (FLRV…TLSF), 195-215 (GSVV…SVLI), and 225-245 (FGAS…IFLI). Residues 42–246 (YGFTIKMALI…IALLIIFLIN (205 aa)) enclose the ABC transmembrane type-1 domain.

Belongs to the binding-protein-dependent transport system permease family. CysTW subfamily.

It is found in the plastid membrane. Part of the ABC transporter complex cysAWTP (TC 3.A.1.6.1) involved in sulfate/thiosulfate import. Probably responsible for the translocation of the substrate across the membrane. The sequence is that of Probable sulfate transport system permease protein cysT (cysT) from Prototheca wickerhamii.